A 295-amino-acid polypeptide reads, in one-letter code: Bifunctional protein FolD (295 aa).

NADP(+) is bound by residues 166–168 (GRS), S195, and I236.

This sequence belongs to the tetrahydrofolate dehydrogenase/cyclohydrolase family. In terms of assembly, homodimer.

It carries out the reaction (6R)-5,10-methylene-5,6,7,8-tetrahydrofolate + NADP(+) = (6R)-5,10-methenyltetrahydrofolate + NADPH. The enzyme catalyses (6R)-5,10-methenyltetrahydrofolate + H2O = (6R)-10-formyltetrahydrofolate + H(+). The protein operates within one-carbon metabolism; tetrahydrofolate interconversion. In terms of biological role, catalyzes the oxidation of 5,10-methylenetetrahydrofolate to 5,10-methenyltetrahydrofolate and then the hydrolysis of 5,10-methenyltetrahydrofolate to 10-formyltetrahydrofolate. This is Bifunctional protein FolD from Chlorobium phaeovibrioides (strain DSM 265 / 1930) (Prosthecochloris vibrioformis (strain DSM 265)).